Reading from the N-terminus, the 935-residue chain is Progesterone receptor (935 aa).

The segment at Met-1 to Ser-49 is disordered. The AF3; mediates transcriptional activation stretch occupies residues Met-1 to Leu-164. Residues Met-1–Ile-568 form a modulating, Pro-Rich region. Residues Ser-17 to Pro-28 show a composition bias toward low complexity. At Ser-20 the chain carries Phosphoserine. The LXXL motif 1 signature appears at Leu-55–Leu-59. The disordered stretch occupies residues Pro-61 to Ala-255. Phosphoserine is present on Ser-81. The LXXL motif 2 signature appears at Leu-115–Trp-119. 2 positions are modified to phosphoserine: Ser-130 and Ser-162. The mediates transcriptional transrepression stretch occupies residues Met-165–His-305. The Nuclear localization signal signature appears at Lys-183–Arg-187. At Ser-190 the chain carries Phosphoserine. The segment covering Pro-191–Pro-203 has biased composition (polar residues). The residue at position 213 (Ser-213) is a Phosphoserine. Residues Glu-220–Asp-231 show a composition bias toward acidic residues. Low complexity predominate over residues Ser-232 to Gly-246. Residue Ser-294 is modified to Phosphoserine; by MAPK1. Residues Gly-331–Pro-365 form a disordered region. Positions Ala-335–Gly-356 are enriched in low complexity. Ser-345 bears the Phosphoserine; by MAPK mark. Residue Lys-388 forms a Glycyl lysine isopeptide (Lys-Gly) (interchain with G-Cter in SUMO); alternate linkage. Lys-388 is covalently cross-linked (Glycyl lysine isopeptide (Lys-Gly) (interchain with G-Cter in ubiquitin); alternate). Residue Ser-400 is modified to Phosphoserine; by CDK2. The segment at Pro-415–Ser-452 is disordered. Residues Pro-418–Arg-433 show a composition bias toward pro residues. Residues Pro-434–Ser-452 show a composition bias toward low complexity. An AF1; mediates transcriptional activation region spans residues Ser-456 to Arg-548. Lys-533 is covalently cross-linked (Glycyl lysine isopeptide (Lys-Gly) (interchain with G-Cter in SUMO)). NR C4-type zinc fingers lie at residues Cys-569–Cys-589 and Cys-605–Cys-629. A DNA-binding region (nuclear receptor) is located at residues Cys-569–Phe-641. Ser-678 carries the phosphoserine modification. Residues Gln-681–Ile-915 form the NR LBD domain. The segment at Leu-689–Lys-935 is AF2; mediates transcriptional activation.

Belongs to the nuclear hormone receptor family. As to quaternary structure, interacts with SMARD1 and UNC45A. Interacts with CUEDC2; the interaction promotes ubiquitination, decreases sumoylation, and represses transcriptional activity. Interacts with PIAS3; the interaction promotes sumoylation of PR in a hormone-dependent manner, inhibits DNA-binding, and alters nuclear export. Interacts with SP1; the interaction requires ligand-induced phosphorylation on Ser-345 by ERK1/2-MAPK. Interacts with PRMT2. Interacts with NCOA2 and NCOA1. Interacts with KLF9. Interacts with GTF2B. Phosphorylated on multiple serine sites. Several of these sites are hormone-dependent. Phosphorylation on Ser-294 is highly hormone-dependent and modulates ubiquitination and sumoylation on Lys-388. Phosphorylation on Ser-345 also requires induction by hormone. Basal phosphorylation on Ser-81, Ser-162, Ser-190 and Ser-400 is increased in response to progesterone and can be phosphorylated in vitro by the CDK2-A1 complex. Increased levels of phosphorylation on Ser-400 also in the presence of EGF, heregulin, IGF, PMA and FBS. Phosphorylation at this site by CDK2 is ligand-independent, and increases nuclear translocation and transcriptional activity. Phosphorylation at Ser-162 and Ser-294, but not at Ser-190, is impaired during the G(2)/M phase of the cell cycle. Phosphorylation on Ser-345 by ERK1/2 MAPK is required for interaction with SP1. In terms of processing, sumoylation is hormone-dependent and represses transcriptional activity. Sumoylation on all three sites is enhanced by PIAS3. Desumoylated by SENP1. Sumoylation on Lys-388, the main site of sumoylation, is repressed by ubiquitination on the same site, and modulated by phosphorylation at Ser-294. Post-translationally, ubiquitination is hormone-dependent and represses sumoylation on the same site. Promoted by MAPK-mediated phosphorylation on Ser-294. Palmitoylated by ZDHHC7 and ZDHHC21. Palmitoylation is required for plasma membrane targeting and for rapid intracellular signaling via ERK and AKT kinases and cAMP generation.

The protein resides in the nucleus. It localises to the cytoplasm. The steroid hormones and their receptors are involved in the regulation of eukaryotic gene expression and affect cellular proliferation and differentiation in target tissues. Transcriptional activator of several progesteron-dependent promoters in a variety of cell types. Involved in activation of SRC-dependent MAPK signaling on hormone stimulation. The chain is Progesterone receptor (PGR) from Ateles paniscus (Black spider monkey).